The sequence spans 588 residues: Cryptochrome-1 (588 aa).

The 130-residue stretch at 3–132 (VNAVHWFRKG…EVIVRISHTL (130 aa)) folds into the Photolyase/cryptochrome alpha/beta domain. Residue lysine 11 forms a Glycyl lysine isopeptide (Lys-Gly) (interchain with G-Cter in ubiquitin) linkage. Residues 50-54 (NRWRF) carry the LIR 1 motif. Serine 71 is subject to Phosphoserine; by AMPK. The LIR 2 motif lies at 82-87 (DVFPRL). A Glycyl lysine isopeptide (Lys-Gly) (interchain with G-Cter in ubiquitin) cross-link involves residue lysine 107. Residues 151 to 156 (KRFQTL) carry the LIR 3 motif. Residue lysine 159 forms a Glycyl lysine isopeptide (Lys-Gly) (interchain with G-Cter in ubiquitin) linkage. Phosphoserine; by MAPK is present on serine 247. Serine 252 contributes to the FAD binding site. 2 consecutive short sequence motifs (LIR) follow at residues 255–260 (LRFGCL) and 271–276 (DLYKKV). Phosphoserine; by AMPK is present on serine 280. Positions 285–290 (SLYGQL) match the LIR 6 motif. Glutamine 289 provides a ligand contact to FAD. A Glycyl lysine isopeptide (Lys-Gly) (interchain with G-Cter in ubiquitin) cross-link involves residue lysine 329. The short motif at 335–339 (TGFPW) is the LIR 7 element. Residue histidine 355 participates in FAD binding. Residues 371–470 (WISWEEGMKV…LIGVNYPKPM (100 aa)) are required for inhibition of CLOCK-BMAL1-mediated transcription. An LIR 8 motif is present at residues 379–384 (KVFEEL). 387–389 (DAD) lines the FAD pocket. Short sequence motifs (LIR) lie at residues 395–400 (GSWMWL), 411–416 (HCYCPV), and 430–435 (RRYLPV). The interaction with TIMELESS stretch occupies residues 471–493 (VNHAEASRLNIERMKQIYQQLSR). Lysine 485 participates in a covalent cross-link: Glycyl lysine isopeptide (Lys-Gly) (interchain with G-Cter in ubiquitin). 2 consecutive short sequence motifs (LIR) follow at residues 486–491 (QIYQQL) and 492–497 (SRYRGL). The disordered stretch occupies residues 511 to 588 (GGLMGYAPGE…GPKVQRQSSN (78 aa)). Polar residues predominate over residues 545 to 568 (DSQQTNPLKQGRSSMGTGLSSGKR). Residue lysine 567 forms a Glycyl lysine isopeptide (Lys-Gly) (interchain with G-Cter in ubiquitin) linkage. Serine 570 bears the Phosphoserine mark.

This sequence belongs to the DNA photolyase class-1 family. In terms of assembly, component of the circadian core oscillator, which includes the CRY proteins, CLOCK or NPAS2, BMAL1 or BMAL2, CSNK1D and/or CSNK1E, TIMELESS, and the PER proteins. Interacts directly with TIMELESS. Interacts directly with PER1, PER2 and PER3; interaction with PER2 inhibits its ubiquitination and vice versa. Interacts with FBXL21. Interacts with FBXL3. Interacts with CLOCK-BMAL1 independently of PER2 and DNA. Interacts with HDAC1, HDAC2 and SIN3B. Interacts with nuclear receptors AR, NR1D1, NR3C1/GR, RORA and RORC; the interaction with at least NR3C1/GR is ligand dependent. Interacts with PRKDC. Interacts with the G protein subunit alpha GNAS; the interaction may block GPCR-mediated regulation of cAMP concentrations. Interacts with PRMT5. Interacts with EZH2. Interacts with MYBBP1A, DOCK7, HNRNPU, RPL7A, RPL8 and RPS3. Interacts with PPP5C (via TPR repeats). Interacts with MAP1LC3B. Interacts with CLOCK. Interacts with BMAL1. Interacts weakly with HDAC3; this interaction is enhanced in the presence of FBXL3. Interacts with TRIM28, KCTD5 and DDB1. Interacts with FOXO1. Interacts with DTL and DDB1-CUL4A complex. Interacts with HNF4A. Interacts with PSMD2 in a KDM8-dependent manner. Interacts with KDM8 in a FBXL3-dependent manner. Interacts with PPARG in a ligand-dependent manner. Interacts with PPARD (via domain NR LBD) and NR1I2 (via domain NR LBD) in a ligand-dependent manner. Interacts with PPARA, NR1I3 and VDR. FAD is required as a cofactor. (6R)-5,10-methylene-5,6,7,8-tetrahydrofolate serves as cofactor. Post-translationally, phosphorylation on Ser-247 by MAPK is important for the inhibition of CLOCK-BMAL1-mediated transcriptional activity. Phosphorylation by CSNK1E requires interaction with PER1 or PER2. Phosphorylation at Ser-71 and Ser-280 by AMPK decreases protein stability. Phosphorylation at Ser-570 exhibits a robust circadian rhythm with a peak at CT8, increases protein stability, prevents SCF(FBXL3)-mediated degradation and is antagonized by interaction with PRKDC. Ubiquitinated by the SCF(FBXL3) and SCF(FBXL21) complexes, regulating the balance between degradation and stabilization. The SCF(FBXL3) complex is mainly nuclear and mediates ubiquitination and subsequent degradation of CRY1. In contrast, cytoplasmic SCF(FBXL21) complex-mediated ubiquitination leads to stabilize CRY1 and counteract the activity of the SCF(FBXL3) complex. The SCF(FBXL3) and SCF(FBXL21) complexes probably mediate ubiquitination at different Lys residues. Ubiquitination at Lys-11 and Lys-107 are specifically ubiquitinated by the SCF(FBXL21) complex but not by the SCF(FBXL3) complex. Ubiquitination may be inhibited by PER2. Deubiquitinated by USP7. In terms of processing, undergoes autophagy-mediated degradation in the liver in a time-dependent manner. Autophagic degradation of CRY1 (an inhibitor of gluconeogenesis) occurs during periods of reduced feeding allowing induction of gluconeogenesis and maintenance of blood glucose levels.

It is found in the cytoplasm. Its subcellular location is the nucleus. Transcriptional repressor which forms a core component of the circadian clock. The circadian clock, an internal time-keeping system, regulates various physiological processes through the generation of approximately 24 hour circadian rhythms in gene expression, which are translated into rhythms in metabolism and behavior. It is derived from the Latin roots 'circa' (about) and 'diem' (day) and acts as an important regulator of a wide array of physiological functions including metabolism, sleep, body temperature, blood pressure, endocrine, immune, cardiovascular, and renal function. Consists of two major components: the central clock, residing in the suprachiasmatic nucleus (SCN) of the brain, and the peripheral clocks that are present in nearly every tissue and organ system. Both the central and peripheral clocks can be reset by environmental cues, also known as Zeitgebers (German for 'timegivers'). The predominant Zeitgeber for the central clock is light, which is sensed by retina and signals directly to the SCN. The central clock entrains the peripheral clocks through neuronal and hormonal signals, body temperature and feeding-related cues, aligning all clocks with the external light/dark cycle. Circadian rhythms allow an organism to achieve temporal homeostasis with its environment at the molecular level by regulating gene expression to create a peak of protein expression once every 24 hours to control when a particular physiological process is most active with respect to the solar day. Transcription and translation of core clock components (CLOCK, NPAS2, BMAL1, BMAL2, PER1, PER2, PER3, CRY1 and CRY2) plays a critical role in rhythm generation, whereas delays imposed by post-translational modifications (PTMs) are important for determining the period (tau) of the rhythms (tau refers to the period of a rhythm and is the length, in time, of one complete cycle). A diurnal rhythm is synchronized with the day/night cycle, while the ultradian and infradian rhythms have a period shorter and longer than 24 hours, respectively. Disruptions in the circadian rhythms contribute to the pathology of cardiovascular diseases, cancer, metabolic syndromes and aging. A transcription/translation feedback loop (TTFL) forms the core of the molecular circadian clock mechanism. Transcription factors, CLOCK or NPAS2 and BMAL1 or BMAL2, form the positive limb of the feedback loop, act in the form of a heterodimer and activate the transcription of core clock genes and clock-controlled genes (involved in key metabolic processes), harboring E-box elements (5'-CACGTG-3') within their promoters. The core clock genes: PER1/2/3 and CRY1/2 which are transcriptional repressors form the negative limb of the feedback loop and interact with the CLOCK|NPAS2-BMAL1|BMAL2 heterodimer inhibiting its activity and thereby negatively regulating their own expression. This heterodimer also activates nuclear receptors NR1D1/2 and RORA/B/G, which form a second feedback loop and which activate and repress BMAL1 transcription, respectively. CRY1 and CRY2 have redundant functions but also differential and selective contributions at least in defining the pace of the SCN circadian clock and its circadian transcriptional outputs. More potent transcriptional repressor in cerebellum and liver than CRY2, though more effective in lengthening the period of the SCN oscillator. On its side, CRY2 seems to play a critical role in tuning SCN circadian period by opposing the action of CRY1. With CRY2, is dispensable for circadian rhythm generation but necessary for the development of intercellular networks for rhythm synchrony. Capable of translocating circadian clock core proteins such as PER proteins to the nucleus. Interacts with CLOCK-BMAL1 independently of PER proteins and is found at CLOCK-BMAL1-bound sites, suggesting that CRY may act as a molecular gatekeeper to maintain CLOCK-BMAL1 in a poised and repressed state until the proper time for transcriptional activation. Represses the CLOCK-BMAL1 induced transcription of BHLHE40/DEC1, ATF4, MTA1, KLF10 and NAMPT. May repress circadian target genes expression in collaboration with HDAC1 and HDAC2 through histone deacetylation. Mediates the clock-control activation of ATR and modulates ATR-mediated DNA damage checkpoint. In liver, mediates circadian regulation of cAMP signaling and gluconeogenesis by binding to membrane-coupled G proteins and blocking glucagon-mediated increases in intracellular cAMP concentrations and CREB1 phosphorylation. Inhibits hepatic gluconeogenesis by decreasing nuclear FOXO1 levels that down-regulates gluconeogenic gene expression. Besides its role in the maintenance of the circadian clock, is also involved in the regulation of other processes. Represses glucocorticoid receptor NR3C1/GR-induced transcriptional activity by binding to glucocorticoid response elements (GREs). Plays a key role in glucose and lipid metabolism modulation, in part, through the transcriptional regulation of genes involved in these pathways, such as LEP or ACSL4. Represses PPARD and its target genes in the skeletal muscle and limits exercise capacity. Plays an essential role in the generation of circadian rhythms in the retina. Represses the transcriptional activity of NR1I2. This is Cryptochrome-1 (Cry1) from Rattus norvegicus (Rat).